We begin with the raw amino-acid sequence, 528 residues long: QDQVIKFTTEGATSQSYKQFIEALRQRLTGGLIHDIPVLPDPTTVEERNRYITVELSNSERESIEVGIDVTNAYVVAYRAGSQSYFLRDAPASASTYLFPGTQRYSLRFDGSYGDLERWAHQTREEISLGLQALTHAISFLRSGASNDEEKARTLIVIIQMASEAARYRCISNRVGVSIRTGTAFQPDPAMLSLENNWDNLSGGVQQSVQDAFPNNVILSSINRQPVVVDSLSHPTVAVLALMLFVCNPPNANQSPLLIRSIVEESKICSSRYEPTVRIGGRDGMCVDVYDDGYHNGNRIIAWKCKDRLEENQLWTLKSDLTIRSNGKCLTTEGYAPGNYVMIYDCTSAVAEATYWEIWDNGTIINPKSALVLSAESSSMGGTLTVQTNEYLMRQGWRTGNNTSPFVTSISGYSDLCMQAQGSNVWLADCDNNKKEQQWALYTDGSIRSVQNTNNCLTSKDHKQGSPIVLMACSNGWASQRWLFKNDGSIYSLYDDMVMDVKGSDPSLKQIILWPYTGKPNQIWLTLF.

At Gln1 the chain carries Pyrrolidone carboxylic acid. Glu164 is a catalytic residue. Asn200 is a glycosylation site (N-linked (GlcNAc...) asparagine). 3 cysteine pairs are disulfide-bonded: Cys247-Cys269, Cys286-Cys305, and Cys329-Cys346. In terms of domain architecture, Ricin B-type lectin 1 spans 273–400 (YEPTVRIGGR…YLMRQGWRTG (128 aa)). One copy of the 1-alpha repeat lies at 283–325 (DGMCVDVYDDGYHNGNRIIAWKCKDRLEENQLWTLKSDLTIRS). Residues 326–366 (NGKCLTTEGYAPGNYVMIYDCTSAVAEATYWEIWDNGTIIN) form a 1-beta repeat. N-linked (GlcNAc...) asparagine glycosylation is found at Asn361 and Asn401. One copy of the 1-gamma repeat lies at 369–401 (SALVLSAESSSMGGTLTVQTNEYLMRQGWRTGN). A Ricin B-type lectin 2 domain is found at 403–527 (TSPFVTSISG…GKPNQIWLTL (125 aa)). One copy of the 2-alpha repeat lies at 414 to 449 (SDLCMQAQGSNVWLADCDNNKKEQQWALYTDGSIRS). 2 cysteine pairs are disulfide-bonded: Cys417–Cys430 and Cys456–Cys473. A 2-beta repeat occupies 453-492 (TNNCLTSKDHKQGSPIVLMACSNGWASQRWLFKNDGSIYS). The stretch at 495–528 (DDMVMDVKGSDPSLKQIILWPYTGKPNQIWLTLF) is one 2-gamma repeat.

The protein in the N-terminal section; belongs to the ribosome-inactivating protein family. Type 2 RIP subfamily. As to quaternary structure, disulfide-linked dimer of A and B chains.

The catalysed reaction is Endohydrolysis of the N-glycosidic bond at one specific adenosine on the 28S rRNA.. In terms of biological role, the A chain is responsible for inhibiting protein synthesis through the catalytic inactivation of 60S ribosomal subunits by removing adenine from position 4,324 of 28S rRNA. Functionally, the B chain is a galactose-specific lectin that facilitates the binding of abrin to the cell membrane that precedes endocytosis. The sequence is that of Abrin-d from Abrus precatorius (Indian licorice).